The primary structure comprises 437 residues: tRNA pseudouridine synthase Pus10 (437 aa).

Residues 76 to 198 (VARDVVEHLS…GGGVDIQVNS (123 aa)) enclose the THUMP domain. The active-site Nucleophile is Asp253. Substrate contacts are provided by Tyr321 and Tyr394.

It belongs to the pseudouridine synthase Pus10 family.

The catalysed reaction is uridine(54) in tRNA = pseudouridine(54) in tRNA. The enzyme catalyses uridine(55) in tRNA = pseudouridine(55) in tRNA. Responsible for synthesis of pseudouridine from uracil-54 and uracil-55 in the psi GC loop of transfer RNAs. This Aeropyrum pernix (strain ATCC 700893 / DSM 11879 / JCM 9820 / NBRC 100138 / K1) protein is tRNA pseudouridine synthase Pus10.